The primary structure comprises 439 residues: U1 small nuclear ribonucleoprotein 70 kDa (439 aa).

Thr2 is subject to N-acetylthreonine. A disordered region spans residues Phe48–Gln79. Positions Ala60–Gln79 are enriched in basic and acidic residues. The required for interaction with U1 RNA stretch occupies residues His92–Gly202. The region spanning Lys103 to Gly181 is the RRM domain. Lys118 carries the post-translational modification N6-acetyllysine. Residue Tyr126 is modified to Phosphotyrosine. The segment at Trp187–Glu439 is disordered. Positions Leu192–Arg201 are enriched in gly residues. Residues Asn207 to Arg254 are compositionally biased toward basic and acidic residues. Residues Ser226 and Ser268 each carry the phosphoserine modification. Residues Arg255 to Ser268 are compositionally biased toward basic residues. Basic and acidic residues-rich tracts occupy residues Arg269 to Arg286 and Arg294 to Arg310. The residue at position 323 (Ser323) is a Phosphoserine. A compositionally biased stretch (basic and acidic residues) spans Pro346 to Arg394. Residue Lys349 forms a Glycyl lysine isopeptide (Lys-Gly) (interchain with G-Cter in SUMO2) linkage. Over residues Gly395 to Asn410 the composition is skewed to gly residues.

As to quaternary structure, component of the U1 snRNP. The U1 snRNP is composed of the U1 snRNA and the 7 core Sm proteins SNRPB, SNRPD1, SNRPD2, SNRPD3, SNRPE, SNRPF and SNRPG that assemble in a heptameric protein ring on the Sm site of the small nuclear RNA to form the core snRNP, and at least three U1 snRNP-specific proteins SNRNP70/U1-70K, SNRPA/U1-A and SNRPC/U1-C. Interacts with SCNM1. Found in a pre-mRNA splicing complex with SFRS4, SFRS5, SNRNP70, SNRPA1, SRRM1 and SRRM2. Found in a pre-mRNA exonic splicing enhancer (ESE) complex with SNRNP70, SNRPA1, SRRM1 and TRA2B/SFRS10. Interacts with dephosphorylated SFRS13A and SFPQ. Interacts with NUDT21/CPSF5, CPSF6, SCAF11, and ZRANB2. Interacts with GEMIN5. Interacts with FUS. Post-translationally, extensively phosphorylated on serine residues in the C-terminal region.

It localises to the nucleus speckle. The protein localises to the nucleus. The protein resides in the nucleoplasm. Component of the spliceosomal U1 snRNP, which is essential for recognition of the pre-mRNA 5' splice-site and the subsequent assembly of the spliceosome. SNRNP70 binds to the loop I region of U1-snRNA. The sequence is that of U1 small nuclear ribonucleoprotein 70 kDa (SNRNP70) from Bos taurus (Bovine).